The following is a 215-amino-acid chain: Cytochrome b6 (215 aa).

Residues 32-52 (IFYCLGGITLTCFLVQVATGF) form a helical membrane-spanning segment. Residue Cys-35 coordinates heme c. Heme b-binding residues include His-86 and His-100. 3 consecutive transmembrane segments (helical) span residues 90–110 (ASMM…TGGF), 116–136 (LTWV…VTGY), and 186–206 (LHTF…FPMI). Heme b-binding residues include His-187 and His-202.

Belongs to the cytochrome b family. PetB subfamily. The 4 large subunits of the cytochrome b6-f complex are cytochrome b6, subunit IV (17 kDa polypeptide, PetD), cytochrome f and the Rieske protein, while the 4 small subunits are PetG, PetL, PetM and PetN. The complex functions as a dimer. It depends on heme b as a cofactor. Heme c serves as cofactor.

The protein resides in the plastid. The protein localises to the chloroplast thylakoid membrane. In terms of biological role, component of the cytochrome b6-f complex, which mediates electron transfer between photosystem II (PSII) and photosystem I (PSI), cyclic electron flow around PSI, and state transitions. This Vitis vinifera (Grape) protein is Cytochrome b6.